Here is a 784-residue protein sequence, read N- to C-terminus: 1-phosphatidylinositol 4,5-bisphosphate phosphodiesterase delta-3-A (784 aa).

Positions Met-1–Pro-25 are disordered. Residues Lys-16–Pro-25 are compositionally biased toward basic and acidic residues. The PH domain occupies Leu-38–Asp-149. The segment at Lys-48–Arg-78 is substrate binding. 3 EF-hand domains span residues Lys-159–Asp-194, Leu-195–Arg-230, and Met-227–Asp-262. The Ca(2+) site is built by Asp-172, Asn-174, Asp-176, Lys-178, Glu-183, Asp-208, Ser-210, Asp-212, Arg-214, and Glu-219. The PI-PLC X-box domain maps to Gln-313–Lys-458. His-328 is an active-site residue. Residues Asn-329, Glu-358, and Asp-360 each contribute to the Ca(2+) site. His-373 is an active-site residue. Glu-407 provides a ligand contact to Ca(2+). The substrate site is built by Lys-456 and Lys-458. The segment at Phe-473–Ala-498 is disordered. The segment covering Asn-486–Ala-495 has biased composition (basic and acidic residues). The region spanning Leu-506–Cys-621 is the PI-PLC Y-box domain. The substrate site is built by Ser-534 and Arg-561. The region spanning Cys-621–Lys-750 is the C2 domain. 5 residues coordinate Ca(2+): Ile-664, Asp-666, Asn-690, Asp-719, and Asp-721.

Requires Ca(2+) as cofactor.

The protein localises to the membrane. It is found in the cytoplasm. Its subcellular location is the cleavage furrow. The enzyme catalyses a 1,2-diacyl-sn-glycero-3-phospho-(1D-myo-inositol-4,5-bisphosphate) + H2O = 1D-myo-inositol 1,4,5-trisphosphate + a 1,2-diacyl-sn-glycerol + H(+). Functionally, hydrolyzes the phosphatidylinositol 4,5-bisphosphate (PIP2) to generate 2 second messenger molecules diacylglycerol (DAG) and inositol 1,4,5-trisphosphate (IP3). DAG mediates the activation of protein kinase C (PKC), while IP3 releases Ca(2+) from intracellular stores. The protein is 1-phosphatidylinositol 4,5-bisphosphate phosphodiesterase delta-3-A (plcd3a) of Danio rerio (Zebrafish).